We begin with the raw amino-acid sequence, 153 residues long: UPF0260 protein YcgN (153 aa).

The protein belongs to the UPF0260 family.

This chain is UPF0260 protein YcgN, found in Salmonella dublin (strain CT_02021853).